A 164-amino-acid polypeptide reads, in one-letter code: UPF0304 protein YfbU (164 aa).

Belongs to the UPF0304 family.

The protein is UPF0304 protein YfbU of Salmonella choleraesuis (strain SC-B67).